Reading from the N-terminus, the 405-residue chain is Argininosuccinate synthase (405 aa).

ATP is bound by residues Ala11–Ser19 and Ala38. Residues Tyr91 and Ser96 each contribute to the L-citrulline site. Gly121 serves as a coordination point for ATP. L-aspartate contacts are provided by Thr123, Asn127, and Asp128. Asn127 provides a ligand contact to L-citrulline. Residues Arg131, Ser181, Ser190, Glu266, and Tyr278 each coordinate L-citrulline.

It belongs to the argininosuccinate synthase family. Type 1 subfamily. In terms of assembly, homotetramer.

It is found in the cytoplasm. It catalyses the reaction L-citrulline + L-aspartate + ATP = 2-(N(omega)-L-arginino)succinate + AMP + diphosphate + H(+). It functions in the pathway amino-acid biosynthesis; L-arginine biosynthesis; L-arginine from L-ornithine and carbamoyl phosphate: step 2/3. The sequence is that of Argininosuccinate synthase from Nitratiruptor sp. (strain SB155-2).